We begin with the raw amino-acid sequence, 390 residues long: Chorismate synthase 2 (390 aa).

Residues arginine 39 and arginine 45 each contribute to the NADP(+) site. Residues 132–134, 253–254, glycine 298, 313–317, and arginine 339 contribute to the FMN site; these read RSS, NA, and KPIPT.

This sequence belongs to the chorismate synthase family. Homotetramer. Requires FMNH2 as cofactor.

It carries out the reaction 5-O-(1-carboxyvinyl)-3-phosphoshikimate = chorismate + phosphate. The protein operates within metabolic intermediate biosynthesis; chorismate biosynthesis; chorismate from D-erythrose 4-phosphate and phosphoenolpyruvate: step 7/7. Functionally, catalyzes the anti-1,4-elimination of the C-3 phosphate and the C-6 proR hydrogen from 5-enolpyruvylshikimate-3-phosphate (EPSP) to yield chorismate, which is the branch point compound that serves as the starting substrate for the three terminal pathways of aromatic amino acid biosynthesis. This reaction introduces a second double bond into the aromatic ring system. The sequence is that of Chorismate synthase 2 from Bacillus cereus (strain ZK / E33L).